We begin with the raw amino-acid sequence, 92 residues long: Acylphosphatase (92 aa).

In terms of domain architecture, Acylphosphatase-like spans 6-92 (RAHVYVSGRV…EGVDGFEIRR (87 aa)). Residues arginine 21 and asparagine 39 contribute to the active site.

This sequence belongs to the acylphosphatase family.

It carries out the reaction an acyl phosphate + H2O = a carboxylate + phosphate + H(+). This Natronomonas pharaonis (strain ATCC 35678 / DSM 2160 / CIP 103997 / JCM 8858 / NBRC 14720 / NCIMB 2260 / Gabara) (Halobacterium pharaonis) protein is Acylphosphatase (acyP).